The chain runs to 119 residues: Circadian clock oscillator protein KaiB (119 aa).

Belongs to the KaiB family. In terms of assembly, may undergo a major conformational rearrangment; in the free state forms homooligomers. When bound to KaiC switches to a monomeric thioredoxin-fold (KaiB(fs)). The active oscillator complex is probably KaiC(6):KaiB(6).

Functionally, component of the KaiBC clock protein complex, which constitutes the main circadian regulator in cyanobacteria; it may modify the ATPase activity of KaiC. Its function is as follows. May be a metamorphic protein which reversibly switches between an inactive tetrameric fold and a rare, thioredoxin-like monomeric fold (KaiB(fs)). KaiB(fs) binds phospho-KaiC, and perhaps clock output effectors. This chain is Circadian clock oscillator protein KaiB, found in Prochlorococcus marinus (strain MIT 9303).